We begin with the raw amino-acid sequence, 839 residues long: LPS-assembly protein LptD (839 aa).

The first 21 residues, 1 to 21 (MAIGITACVLSLINYQGLAYS), serve as a signal peptide directing secretion.

The protein belongs to the LptD family. As to quaternary structure, component of the lipopolysaccharide transport and assembly complex. Interacts with LptE and LptA.

The protein resides in the cell outer membrane. Its function is as follows. Together with LptE, is involved in the assembly of lipopolysaccharide (LPS) at the surface of the outer membrane. The sequence is that of LPS-assembly protein LptD from Legionella pneumophila (strain Paris).